The primary structure comprises 1288 residues: Contactin-associated protein-like 3B (1288 aa).

A signal peptide spans 1 to 25; sequence MASVAWAVLKVLLLLPTQTWSPVGA. The segment at 23-61 is disordered; that stretch reads VGAGNPPDCDSPLASALPRSSFSSSSELSSSHGPGFSRL. The Extracellular segment spans residues 26–1245; that stretch reads GNPPDCDSPL…LVNADRRDSA (1220 aa). The F5/8 type C domain maps to 31 to 177; sequence CDSPLASALP…IGMRIEVYGC (147 aa). Intrachain disulfides connect C31/C177, C332/C364, C513/C545, C551/C562, C556/C571, and C573/C583. Over residues 33-59 the composition is skewed to low complexity; the sequence is SPLASALPRSSFSSSSELSSSHGPGFS. 2 Laminin G-like domains span residues 183 to 364 and 370 to 545; these read VVYF…SFSC and VPVT…IDSC. The N-linked (GlcNAc...) asparagine glycan is linked to N359. Residues 547–584 enclose the EGF-like 1 domain; the sequence is ITDRCLPSYCEHGGECSQSWDTFSCDCLGTGYTGETCH. In terms of domain architecture, Fibrinogen C-terminal spans 585–792; the sequence is SSLYEQSCEA…LLCRGDKSFW (208 aa). The N-linked (GlcNAc...) asparagine glycan is linked to N706. Residues 793–958 enclose the Laminin G-like 3 domain; that stretch reads NSASFNTETS…TVTPGVEPGC (166 aa). Disulfide bonds link C931/C958, C962/C975, C969/C984, C986/C996, and C1167/C1203. Residues 959 to 997 enclose the EGF-like 2 domain; that stretch reads AGHCSTYGHLCRNGGRCREKRRGVTCDCAFSAYDGPFCS. Residues 1016 to 1203 enclose the Laminin G-like 4 domain; that stretch reads EHYTLSENSS…RGHVAPMARC (188 aa). A disordered region spans residues 1215 to 1236; it reads ELAPRLAGGAGRSGPVDEGEPL. Residues 1246–1266 traverse the membrane as a helical segment; sequence VIGGVIAVEIFILLCITAIAI. Topologically, residues 1267–1288 are cytoplasmic; the sequence is RIYQQRKLRKENESKVSKKEEC.

The protein belongs to the neurexin family.

The protein localises to the membrane. This chain is Contactin-associated protein-like 3B (CNTNAP3B), found in Homo sapiens (Human).